A 218-amino-acid chain; its full sequence is Thiopurine S-methyltransferase (218 aa).

S-adenosyl-L-methionine-binding residues include W10, L45, E66, and R123.

Belongs to the class I-like SAM-binding methyltransferase superfamily. TPMT family.

The protein localises to the cytoplasm. It carries out the reaction S-adenosyl-L-methionine + a thiopurine = S-adenosyl-L-homocysteine + a thiopurine S-methylether.. The sequence is that of Thiopurine S-methyltransferase from Shewanella baltica (strain OS155 / ATCC BAA-1091).